An 858-amino-acid polypeptide reads, in one-letter code: DNA mismatch repair protein MutS (858 aa).

603–610 contacts ATP; it reads GPNMSGKS.

The protein belongs to the DNA mismatch repair MutS family.

In terms of biological role, this protein is involved in the repair of mismatches in DNA. It is possible that it carries out the mismatch recognition step. This protein has a weak ATPase activity. The polypeptide is DNA mismatch repair protein MutS (Streptococcus agalactiae serotype Ia (strain ATCC 27591 / A909 / CDC SS700)).